The chain runs to 159 residues: Transcription elongation factor A protein-like 1 (159 aa).

Residues 1–121 (MDKPRKENEE…QFKGDIHGRN (121 aa)) form a disordered region. Over residues 17-34 (KTDEERPPVEHSPEKQSP) the composition is skewed to basic and acidic residues. A compositionally biased stretch (acidic residues) spans 37 to 54 (QSSEEQSSEEEFFPEELL). Basic and acidic residues-rich tracts occupy residues 64-80 (SEERPPQEGLSRKDLFE) and 95-119 (HKLEEGSFKERLARSRPQFKGDIHG).

The protein belongs to the TFS-II family. TFA subfamily.

It localises to the nucleus. Its function is as follows. May be involved in transcriptional regulation. Modulates various viral and cellular promoters in a promoter context-dependent manner. Does not bind DNA directly. This is Transcription elongation factor A protein-like 1 from Gorilla gorilla gorilla (Western lowland gorilla).